Here is a 440-residue protein sequence, read N- to C-terminus: Transposon Ty1-DR3 Gag polyprotein (440 aa).

3 stretches are compositionally biased toward polar residues: residues 1-10 (MESQQLSNYP), 48-60 (TKAN…TPAS), and 127-152 (QSQF…GNTF). Disordered regions lie at residues 1-93 (MESQ…MMTQ), 126-173 (PQSQ…RPPP), and 352-440 (GSRN…PETY). Low complexity predominate over residues 153–165 (TDSSSADSDMTST). The segment at 299-401 (NNGIHINNKV…NSKSKTARAH (103 aa)) is RNA-binding. Positions 402–428 (NVSTSINSPSTDNDSISKSTTEPIQLN) are enriched in polar residues. Position 416 is a phosphoserine (Ser-416). The span at 429–440 (NKHDLHLRPETY) shows a compositional bias: basic and acidic residues.

As to quaternary structure, homotrimer.

It localises to the cytoplasm. Functionally, capsid protein (CA) is the structural component of the virus-like particle (VLP), forming the shell that encapsulates the retrotransposons dimeric RNA genome. The particles are assembled from trimer-clustered units and there are holes in the capsid shells that allow for the diffusion of macromolecules. CA also has nucleocapsid-like chaperone activity, promoting primer tRNA(i)-Met annealing to the multipartite primer-binding site (PBS), dimerization of Ty1 RNA and initiation of reverse transcription. This chain is Transposon Ty1-DR3 Gag polyprotein (TY1A-DR3), found in Saccharomyces cerevisiae (strain ATCC 204508 / S288c) (Baker's yeast).